We begin with the raw amino-acid sequence, 410 residues long: Cytosolic isocitrate dehydrogenase [NADP] (410 aa).

NADP(+)-binding positions include Thr77–Thr79 and Arg84. Thr79 lines the substrate pocket. Residues Ser96–Arg102, Arg111, and Arg134 each bind substrate. Lys260 is a binding site for NADP(+). Mn(2+)-binding residues include Asp275 and Asp279. NADP(+)-binding positions include Gly310–His315 and Asn328.

This sequence belongs to the isocitrate and isopropylmalate dehydrogenases family. It depends on Mg(2+) as a cofactor. Mn(2+) serves as cofactor.

It is found in the cytoplasm. Its subcellular location is the cytosol. The enzyme catalyses D-threo-isocitrate + NADP(+) = 2-oxoglutarate + CO2 + NADPH. Its function is as follows. May supply 2-oxoglutarate for amino acid biosynthesis and ammonia assimilation via the glutamine synthetase/glutamate synthase (GS/GOGAT) pathway. May be involved in the production of NADPH to promote redox signaling or homeostasis in response to oxidative stress, or redox signaling linked to defense responses. In Arabidopsis thaliana (Mouse-ear cress), this protein is Cytosolic isocitrate dehydrogenase [NADP].